The sequence spans 1038 residues: Fibronectin-binding protein A (1038 aa).

Positions 1-36 are cleaved as a signal peptide; it reads MKNNLRYGIRKHKLGAASVFLGTMIVVGMGQDKEAA. Residues 7–18 carry the YSIRK-G/S signaling motif motif; sequence YGIRKHKLGAAS. The interval 37–193 is disordered; that stretch reads ASEQKTTTVE…VSEVKGTDVT (157 aa). Positions 37 to 507 are ligand-binding A region; that stretch reads ASEQKTTTVE…SNKADGNGKN (471 aa). Positions 39–92 are enriched in polar residues; it reads EQKTTTVEENGNSATDNKTSETQTTATNVNHIEETQSYNATVTEQPSNATQVTT. Positions 112–121 are enriched in basic and acidic residues; that stretch reads TVKEEEKPQV. The segment covering 122 to 164 has biased composition (polar residues); that stretch reads KETTQPQDNSGNQRQVDLTPKKVTQNQGTETQVEVAQPRTASE. The span at 174–189 shows a compositional bias: basic and acidic residues; the sequence is DVAEAKEASDVSEVKG. A fibrinogen/elastin/tropoelastin-binding region spans residues 189-507; the sequence is GTDVTSKVTV…SNKADGNGKN (319 aa). Positions 508–868 are fibronectin-binding; that stretch reads GQIIQDNDFE…EGQQTIEEDT (361 aa). A B-1 repeat occupies 541 to 570; it reads ENQDNTPLDIDYHTAIDGEGGYVDGYIETI. The 2 X approximate tandem repeats stretch occupies residues 541-600; it reads ENQDNTPLDIDYHTAIDGEGGYVDGYIETIEETDSSAIDIDYHTAVDSEVGHVGGYTESS. A B-2 repeat occupies 571 to 600; that stretch reads EETDSSAIDIDYHTAVDSEVGHVGGYTESS. Disordered regions lie at residues 736–804, 825–976, and 989–1015; these read LGYE…GGNI, IEED…GKVV, and VAPTKKAQSKKSELPETGGEESTNKGM. Residues 741-778 form a D-1 repeat; it reads GQNSGNQSFEEDTEEDKPKYEQGGNIVDIDFDSVPQIH. The interval 741–898 is 4 X approximate tandem repeats; it reads GQNSGNQSFE…TPEVPSEPET (158 aa). A D-2 repeat occupies 779-816; that stretch reads GQNKGDQSFEEDTEKDKPKYEHGGNIIDIDFDSVPQIH. The stretch at 817–855 is one D-3 repeat; sequence GFNKHNEIIEEDTNKDKPNYQFGGHNSVDFEEDTLPKVS. A compositionally biased stretch (basic and acidic residues) spans 825-834; it reads IEEDTNKDKP. The D-4 repeat unit spans residues 856–898; that stretch reads GQNEGQQTIEEDTTPPTPPTPEVPSEPETPMPPTPEVPSEPET. Residues 870–958 show a composition bias toward pro residues; that stretch reads PPTPPTPEVP…PAEPGKPVPP (89 aa). WR repeat units follow at residues 899–912, 913–926, 927–940, 941–954, and 955–968; these read PTPPTPEVPSEPET, PTPPTPEVPAEPGK, and PVPPAKEEPKKPSK. A 5 X tandem repeats, Pro-rich (WR) region spans residues 899 to 968; that stretch reads PTPPTPEVPS…AKEEPKKPSK (70 aa). The LPXTG sorting signal motif lies at 1002-1006; the sequence is LPETG. Pentaglycyl murein peptidoglycan amidated threonine is present on threonine 1005. Positions 1006 to 1038 are cleaved as a propeptide — removed by sortase; it reads GGEESTNKGMLFGGLFSILGLALLRRNKKNNKA.

The protein localises to the secreted. The protein resides in the cell wall. Functionally, promotes bacterial attachment to multiple substrates, such as fibronectin (Fn), fibrinogen (Fg), elastin peptides and tropoelastin. This confers to S.aureus the ability to invade endothelial cells. Promotes adherence to and aggregation of activated platelets. The chain is Fibronectin-binding protein A (fnbA) from Staphylococcus aureus (strain Mu50 / ATCC 700699).